The sequence spans 120 residues: uncharacterized protein (120 aa).

This is an uncharacterized protein from Bacillus subtilis (strain 168).